Here is a 262-residue protein sequence, read N- to C-terminus: Hydroxyethylthiazole kinase (262 aa).

Methionine 50 is a substrate binding site. Residues arginine 125 and threonine 171 each coordinate ATP. Glycine 198 is a substrate binding site.

The protein belongs to the Thz kinase family. Mg(2+) serves as cofactor.

The enzyme catalyses 5-(2-hydroxyethyl)-4-methylthiazole + ATP = 4-methyl-5-(2-phosphooxyethyl)-thiazole + ADP + H(+). It participates in cofactor biosynthesis; thiamine diphosphate biosynthesis; 4-methyl-5-(2-phosphoethyl)-thiazole from 5-(2-hydroxyethyl)-4-methylthiazole: step 1/1. Its function is as follows. Catalyzes the phosphorylation of the hydroxyl group of 4-methyl-5-beta-hydroxyethylthiazole (THZ). The chain is Hydroxyethylthiazole kinase from Shigella boydii serotype 18 (strain CDC 3083-94 / BS512).